Here is a 947-residue protein sequence, read N- to C-terminus: Bifunctional glutamine synthetase adenylyltransferase/adenylyl-removing enzyme (947 aa).

Positions 1–440 (MTPLSSPLSQ…VFNELIGDDE (440 aa)) are adenylyl removase. The interval 450 to 947 (SEPWREVWQD…ASWRKWLVAV (498 aa)) is adenylyl transferase.

The protein belongs to the GlnE family. Mg(2+) is required as a cofactor.

It carries out the reaction [glutamine synthetase]-O(4)-(5'-adenylyl)-L-tyrosine + phosphate = [glutamine synthetase]-L-tyrosine + ADP. The enzyme catalyses [glutamine synthetase]-L-tyrosine + ATP = [glutamine synthetase]-O(4)-(5'-adenylyl)-L-tyrosine + diphosphate. Involved in the regulation of glutamine synthetase GlnA, a key enzyme in the process to assimilate ammonia. When cellular nitrogen levels are high, the C-terminal adenylyl transferase (AT) inactivates GlnA by covalent transfer of an adenylyl group from ATP to specific tyrosine residue of GlnA, thus reducing its activity. Conversely, when nitrogen levels are low, the N-terminal adenylyl removase (AR) activates GlnA by removing the adenylyl group by phosphorolysis, increasing its activity. The regulatory region of GlnE binds the signal transduction protein PII (GlnB) which indicates the nitrogen status of the cell. In Salmonella typhimurium (strain LT2 / SGSC1412 / ATCC 700720), this protein is Bifunctional glutamine synthetase adenylyltransferase/adenylyl-removing enzyme.